The sequence spans 344 residues: Ubiquitin-associated domain-containing protein 2 (344 aa).

A signal peptide spans 1–35 (MFTSTGSSGLYKAPLSKSLLLVPSALSLLLALLLP). Residues 36–91 (HCQKLFVYDLHAVKNDFQIWRLICGRIICLDLKDTFCSSLLIYNFRIFERRYGSRK) are Extracellular-facing. The chain crosses the membrane as a helical span at residues 92-112 (FASFLLGSWVLSALFDFLLIE). Topologically, residues 113–125 (AMQYFFGITAASN) are cytoplasmic. A helical membrane pass occupies residues 126–146 (LPSGFLAPVFALFVPFYCSIP). Topologically, residues 147–163 (RVQVAQILGPLSITNKT) are extracellular. Asparagine 161 is a glycosylation site (N-linked (GlcNAc...) asparagine). The chain crosses the membrane as a helical span at residues 164-184 (LIYILGLQLFTSGSYIWIVAI). The Cytoplasmic portion of the chain corresponds to 185–344 (SGLMSGLCYD…NVATNFLLQH (160 aa)). Residues 304–344 (EVSEEQVARLMEMGFSRGDALEALRASNNDLNVATNFLLQH) form the UBA domain.

As to quaternary structure, interacts with FAF2. Interacts with LMBR1L. Interacts with AMFR and VCP.

The protein localises to the endoplasmic reticulum membrane. Its function is as follows. Restricts trafficking of FAF2 from the endoplasmic reticulum to lipid droplets. In association with LMBR1L and E3 ubiquitin-protein ligase AMFR, negatively regulates the canonical Wnt signaling pathway in the lymphocytes by promoting the ubiquitin-mediated degradation of CTNNB1 and Wnt receptors FZD6 and LRP6. The sequence is that of Ubiquitin-associated domain-containing protein 2 (UBAC2) from Homo sapiens (Human).